A 429-amino-acid chain; its full sequence is MKKQNNLRSLAAQAVEQVVEQGQSLSNVLPPLQQKVADKDKALLQELCFGVLRTLSQLEWLINKLMSRPMTGKQRTVHYLIMVGFYQLLYTRVPPHAALAETVEGAVSIKRPQLKGLINGVLRQFQRQQETLLNEFATSDARFLHPGWLVKRLQNAYPTQWQRIIEANNQRPPMWLRVNRTHHTRDGWLGLLEDAGMKGYPHPDYPDAVRLETPAPVHALPGFAEGWVTVQDASAQGCAVFLAPQNGEHILDLCAAPGGKTTHILEVAPEADVLAVDIDEQRLSRVYDNLKRLGMKATVKQGDGRYPAQWCGEQQFDRILLDAPCSATGVIRRHPDIKWLRRDRDIAELAQLQAEILDTVWPRLKPGGTLVYATCSVLPEENRDQIKTFLQRTPDAALSETGTPDQPGQQNLPGGEEGDGFFYAKLIKK.

S-adenosyl-L-methionine contacts are provided by residues 254–260 (CAAPGGK), D277, D303, and D322. The active-site Nucleophile is the C375. Residues 397–419 (ALSETGTPDQPGQQNLPGGEEGD) are disordered. The span at 400 to 412 (ETGTPDQPGQQNL) shows a compositional bias: polar residues.

It belongs to the class I-like SAM-binding methyltransferase superfamily. RsmB/NOP family.

It localises to the cytoplasm. It catalyses the reaction cytidine(967) in 16S rRNA + S-adenosyl-L-methionine = 5-methylcytidine(967) in 16S rRNA + S-adenosyl-L-homocysteine + H(+). Functionally, specifically methylates the cytosine at position 967 (m5C967) of 16S rRNA. The polypeptide is Ribosomal RNA small subunit methyltransferase B (Salmonella paratyphi A (strain ATCC 9150 / SARB42)).